The following is a 656-amino-acid chain: Chaperone protein DnaK (656 aa).

Phosphothreonine; by autocatalysis is present on T204. Positions 607–656 (VYAKKGGAAGAPPGGEAEGEPQAQAGGKKEDVVDAEFEEVKDEKKKDEDK) are disordered. Over residues 620-632 (GGEAEGEPQAQAG) the composition is skewed to low complexity. A compositionally biased stretch (basic and acidic residues) spans 647–656 (KDEKKKDEDK).

Belongs to the heat shock protein 70 family.

In terms of biological role, acts as a chaperone. This Coxiella burnetii (strain CbuK_Q154) (Coxiella burnetii (strain Q154)) protein is Chaperone protein DnaK.